We begin with the raw amino-acid sequence, 472 residues long: MSTTSKESLVCNLRQLKCHFTWNLIAEDESLDEFEDRVFNKDEFQNSEFKATMCNILAYVKHCRGLNEAALQCLGEAEGFIQQQHPDQVEIRSLVTWGNYAWVYYHMGQFSKAQAYLDKVKQVCKKFSSPYRIENPALDCEEGWARLKCTKNQNERVKVCFQKALEKDPKNPEFTSGWAIAFYRLDDWPARNYCIDSLEQAIQLSPDNTYVKVLLALKLDAVHVHKNQAMALVEEALKKDPSAIDTLLRAARFYCKVYDTDRAIQLLRKALEKLPNNAYVHYYMGCCYRSKVHHMLNRREMVFSGDRKKLEELIQLAVNHLRKAEEIKEMLEYSCSFLADLYIIAKKYDEADYYFQKELSKDLPPGPKQLLHLRYGNFQFFQMKRQDKAIYHYMEGVKIKKKTIPQKKMREKLQRIALRRLHEDESDSEALHILAFLQENGGGQQADKDSERGVDSANQVPSASLDEDGAEY.

At Ser2 the chain carries N-acetylserine. TPR repeat units follow at residues 51–89 (ATMC…PDQV), 90–135 (EIRS…RIEN), 136–171 (PALD…DPKN), 172–208 (PEFT…SPDN), 244–277 (IDTL…LPNN), 278–333 (AYVH…MLEY), 334–364 (SCSF…KDLP), 365–403 (PGPK…KKKT), and 404–445 (IPQK…GGQQ). Residues 441-472 (GGGQQADKDSERGVDSANQVPSASLDEDGAEY) form a disordered region.

The protein belongs to the IFIT family. As to quaternary structure, domain-swapped homodimer. Component of an interferon-dependent multiprotein complex, at least composed of IFIT1, IFIT2 and IFIT3. Interacts with IFIT1 and IFIT3. Interacts with STING1/MITA and disrupts its interaction with MAVS or TBK1. Interacts with EIF3C.

Its subcellular location is the cytoplasm. It localises to the endoplasmic reticulum. Its function is as follows. IFN-induced antiviral protein which inhibits expression of viral messenger RNAs lacking 2'-O-methylation of the 5' cap. The ribose 2'-O-methylation would provide a molecular signature to distinguish between self and non-self mRNAs by the host during viral infection. Viruses evolved several ways to evade this restriction system such as encoding their own 2'-O-methylase for their mRNAs or by stealing host cap containing the 2'-O-methylation (cap snatching mechanism). Binds AU-rich viral RNAs, with or without 5' triphosphorylation, RNA-binding is required for antiviral activity. Can promote apoptosis. The sequence is that of Interferon-induced protein with tetratricopeptide repeats 2 (Ifit2) from Mus musculus (Mouse).